We begin with the raw amino-acid sequence, 431 residues long: Cyclic GMP-AMP synthase-like receptor (431 aa).

Residues serine 73 and 85 to 87 contribute to the ATP site; that span reads EFD. Residues glutamate 85, aspartate 87, and aspartate 212 each coordinate Mg(2+). Aspartate 212 contacts GTP. ATP contacts are provided by residues lysine 290 and 304–308; that span reads SYALK. Residue glutamate 316 participates in Mn(2+) binding.

This sequence belongs to the mab-21 family. Mg(2+) is required as a cofactor. It depends on Mn(2+) as a cofactor.

It catalyses the reaction GTP + ATP = 2',3'-cGAMP + 2 diphosphate. It carries out the reaction GTP + ATP = pppGp(2'-5')A + diphosphate. The catalysed reaction is pppGp(2'-5')A = 2',3'-cGAMP + diphosphate. In terms of biological role, nucleotidyltransferase that catalyzes the formation of cyclic GMP-AMP (2',3'-cGAMP) from ATP and GTP and plays a key role in innate immunity. Acts as a key sensor of double-stranded RNA (dsRNA), the presence of dsRNA in the cytoplasm being a danger signal that triggers the immune responses. Directly binds dsRNA, activating the nucleotidyltransferase activity, leading to synthesis of 2',3'-cGAMP, a second messenger that binds to and activates Sting, thereby triggering the immune response via activation of the NF-kappa-B transcription factor. This chain is Cyclic GMP-AMP synthase-like receptor, found in Frankliniella occidentalis (Western flower thrips).